Consider the following 210-residue polypeptide: Dephospho-CoA kinase (210 aa).

In terms of domain architecture, DPCK spans 4–201 (IVALTGGICS…NFYIYLSKQN (198 aa)). ATP is bound at residue 12–17 (CSGKTT).

Belongs to the CoaE family.

Its subcellular location is the cytoplasm. The catalysed reaction is 3'-dephospho-CoA + ATP = ADP + CoA + H(+). It participates in cofactor biosynthesis; coenzyme A biosynthesis; CoA from (R)-pantothenate: step 5/5. Catalyzes the phosphorylation of the 3'-hydroxyl group of dephosphocoenzyme A to form coenzyme A. This Buchnera aphidicola subsp. Schizaphis graminum (strain Sg) protein is Dephospho-CoA kinase.